The primary structure comprises 244 residues: Phosphoadenosine 5'-phosphosulfate reductase (244 aa).

The Nucleophile; cysteine thiosulfonate intermediate role is filled by C239.

It belongs to the PAPS reductase family. CysH subfamily.

It localises to the cytoplasm. It carries out the reaction [thioredoxin]-disulfide + sulfite + adenosine 3',5'-bisphosphate + 2 H(+) = [thioredoxin]-dithiol + 3'-phosphoadenylyl sulfate. The protein operates within sulfur metabolism; hydrogen sulfide biosynthesis; sulfite from sulfate: step 3/3. Its function is as follows. Catalyzes the formation of sulfite from phosphoadenosine 5'-phosphosulfate (PAPS) using thioredoxin as an electron donor. The polypeptide is Phosphoadenosine 5'-phosphosulfate reductase (Sodalis glossinidius (strain morsitans)).